The following is a 98-amino-acid chain: PqqA binding protein (98 aa).

The protein belongs to the PqqD family. Monomer. Interacts with PqqE.

Its pathway is cofactor biosynthesis; pyrroloquinoline quinone biosynthesis. Functions as a PqqA binding protein and presents PqqA to PqqE, in the pyrroloquinoline quinone (PQQ) biosynthetic pathway. In Rhizobium meliloti (strain 1021) (Ensifer meliloti), this protein is PqqA binding protein.